Reading from the N-terminus, the 307-residue chain is Elongation factor Ts (307 aa).

Residues 79 to 82 (TDFV) are involved in Mg(2+) ion dislocation from EF-Tu.

This sequence belongs to the EF-Ts family.

It localises to the cytoplasm. Its function is as follows. Associates with the EF-Tu.GDP complex and induces the exchange of GDP to GTP. It remains bound to the aminoacyl-tRNA.EF-Tu.GTP complex up to the GTP hydrolysis stage on the ribosome. The polypeptide is Elongation factor Ts (tsf) (Bartonella quintana (strain Toulouse) (Rochalimaea quintana)).